The primary structure comprises 355 residues: Chemerin-like receptor 2 (355 aa).

The Extracellular segment spans residues 1–41 (MEDLEETLFEEFENYSYALDYYSLESDLEEKVQLGVVHWVS). Asn14 carries an N-linked (GlcNAc...) asparagine glycan. Residues 42-62 (LVLYCLSFVLGIPGNAIVIWF) form a helical membrane-spanning segment. At 63–73 (TGFKWKRTVST) the chain is on the cytoplasmic side. A helical membrane pass occupies residues 74 to 94 (LWFLNLAIADFIFLLFLPLYI). At 95–112 (SYVVMNFHWPFGIWLCKA) the chain is on the extracellular side. Cys110 and Cys187 are disulfide-bonded. A helical membrane pass occupies residues 113–133 (NSFTAQLNMFASVFFLTVISL). Residues 134–154 (DHYIHLIHPVLSHRHRTLKNS) are Cytoplasmic-facing. Residues 155–175 (LIVIIFIWLLASLIGGPALYF) form a helical membrane-spanning segment. Topologically, residues 176 to 210 (RDTVEFNNHTLCYNNFQKHDPDLTVIRHHVLTWVK) are extracellular. The chain crosses the membrane as a helical span at residues 211–231 (YIVGYLFPLLTMSICYLCLIL). The Cytoplasmic segment spans residues 232–247 (KVKKRSILISSRHFWT). The chain crosses the membrane as a helical span at residues 248–268 (ILAVVVAFVVCWTPYHLFSIW). Residues 269 to 286 (ELTIHHNSYSHHVMQAGI) lie on the Extracellular side of the membrane. A helical membrane pass occupies residues 287-307 (PLSTGLAFLNSCLNPILYVLI). Over 308–355 (SKKFQARFRSSVAEILKYTLWEVSCSGTVSEQLRNSETKNLCLLETAQ) the chain is Cytoplasmic.

Belongs to the chemokine-like receptor (CMKLR) family.

It localises to the cell membrane. Its function is as follows. Receptor for chemoattractant adipokine chemerin/RARRES2 suggesting a role for this receptor in the regulation of inflammation and energy homesotasis. Signals mainly via beta-arrestin pathway. Binding of RARRES2 activates weakly G proteins, calcium mobilization and MAPK1/MAPK3 (ERK1/2) phosphorylation too. Acts also as a receptor for TAFA1, mediates its effects on neuronal stem-cell proliferation and differentiation via the activation of ROCK/ERK and ROCK/STAT3 signaling pathway. The sequence is that of Chemerin-like receptor 2 (CMKLR2) from Macaca fascicularis (Crab-eating macaque).